Reading from the N-terminus, the 165-residue chain is MKNKLIAKSLLTIAAIGITTTTIASTADASEGYGPREKKPVSINHNIVEYNDGTFKYQSRPKFNSTPKYIKFKHDYNILEFNDGTFEYGARPQFNKPAAKTDATIKKEQKLIQAQNLVREFEKTHTVSAHRKAQKAVNLVSFEYKVKKMVLQERIDNVLKQGLVR.

The N-terminal stretch at 1 to 29 (MKNKLIAKSLLTIAAIGITTTTIASTADA) is a signal peptide.

As to quaternary structure, interacts with host fibrinogen alpha chain/FGA. Interacts with host complement protein C3.

It localises to the secreted. Functionally, extracellular fibrinogen-binding protein that plays an important role in virulence. By interacting with the alpha chain of fibrinogen and its derivative fibrin, enhances a non-functional interaction between fibrinogen and platelets and is responsible for repression of fibrinogen-dependent platelet aggregation. In addition, assembles a fibrinogen protective shield around the bacteria which results in impaired phagocytic clearance by the host. Mechanistically, interacts with host complement C3b deposited on the surface of the bacterium via its C-terminal and then recruits fibrinogen via its N-terminal. The protein is Fibrinogen-binding protein (fib) of Staphylococcus aureus.